The primary structure comprises 113 residues: DNA-binding protein PTO0204 (113 aa).

The protein belongs to the PDCD5 family.

The sequence is that of DNA-binding protein PTO0204 from Picrophilus torridus (strain ATCC 700027 / DSM 9790 / JCM 10055 / NBRC 100828 / KAW 2/3).